Reading from the N-terminus, the 104-residue chain is Small ribosomal subunit protein uS10 (104 aa).

Belongs to the universal ribosomal protein uS10 family. As to quaternary structure, part of the 30S ribosomal subunit.

Its function is as follows. Involved in the binding of tRNA to the ribosomes. This Ruegeria pomeroyi (strain ATCC 700808 / DSM 15171 / DSS-3) (Silicibacter pomeroyi) protein is Small ribosomal subunit protein uS10.